Consider the following 655-residue polypeptide: uncharacterized protein (655 aa).

The PE-PPE domain maps to 245–469 (PGVIAQALFT…NLKVIVNLGY (225 aa)).

Belongs to the mycobacterial PPE family.

This is an uncharacterized protein from Mycobacterium tuberculosis (strain ATCC 25618 / H37Rv).